Here is a 1405-residue protein sequence, read N- to C-terminus: ATP-dependent helicase/nuclease subunit A (1405 aa).

One can recognise a UvrD-like helicase ATP-binding domain in the interval 7–482 (REWTPDQLAA…ILLKANFRSR (476 aa)). 28-35 (AAAGAGKT) lines the ATP pocket. The region spanning 551-914 (PEAVGAGKGG…RVMSIHRAKG (364 aa)) is the UvrD-like helicase C-terminal domain. Disordered regions lie at residues 778–797 (QEPW…KAVP) and 1132–1165 (AGKT…QDET). A compositionally biased stretch (low complexity) spans 787–796 (GPGAAAGKAV).

Belongs to the helicase family. AddA subfamily. Heterodimer of AddA and AddB/RexB. It depends on Mg(2+) as a cofactor.

It catalyses the reaction Couples ATP hydrolysis with the unwinding of duplex DNA by translocating in the 3'-5' direction.. The enzyme catalyses ATP + H2O = ADP + phosphate + H(+). Its function is as follows. The heterodimer acts as both an ATP-dependent DNA helicase and an ATP-dependent, dual-direction single-stranded exonuclease. Recognizes the chi site generating a DNA molecule suitable for the initiation of homologous recombination. The AddA nuclease domain is required for chi fragment generation; this subunit has the helicase and 3' -&gt; 5' nuclease activities. This Moorella thermoacetica (strain ATCC 39073 / JCM 9320) protein is ATP-dependent helicase/nuclease subunit A.